Reading from the N-terminus, the 527-residue chain is ATP synthase subunit alpha (527 aa).

172-179 (GDRQTGKT) is a binding site for ATP.

It belongs to the ATPase alpha/beta chains family. In terms of assembly, F-type ATPases have 2 components, CF(1) - the catalytic core - and CF(0) - the membrane proton channel. CF(1) has five subunits: alpha(3), beta(3), gamma(1), delta(1), epsilon(1). CF(0) has three main subunits: a(1), b(2) and c(9-12). The alpha and beta chains form an alternating ring which encloses part of the gamma chain. CF(1) is attached to CF(0) by a central stalk formed by the gamma and epsilon chains, while a peripheral stalk is formed by the delta and b chains.

It localises to the cell inner membrane. It catalyses the reaction ATP + H2O + 4 H(+)(in) = ADP + phosphate + 5 H(+)(out). Its function is as follows. Produces ATP from ADP in the presence of a proton gradient across the membrane. The alpha chain is a regulatory subunit. The polypeptide is ATP synthase subunit alpha (Bacteroides fragilis (strain ATCC 25285 / DSM 2151 / CCUG 4856 / JCM 11019 / LMG 10263 / NCTC 9343 / Onslow / VPI 2553 / EN-2)).